A 183-amino-acid chain; its full sequence is Large ribosomal subunit protein uL6 (183 aa).

The protein belongs to the universal ribosomal protein uL6 family. In terms of assembly, part of the 50S ribosomal subunit.

This protein binds to the 23S rRNA, and is important in its secondary structure. It is located near the subunit interface in the base of the L7/L12 stalk, and near the tRNA binding site of the peptidyltransferase center. The polypeptide is Large ribosomal subunit protein uL6 (Mycoplasmoides gallisepticum (strain R(low / passage 15 / clone 2)) (Mycoplasma gallisepticum)).